The following is a 456-amino-acid chain: 3-isopropylmalate dehydratase large subunit (456 aa).

[4Fe-4S] cluster contacts are provided by Cys336, Cys396, and Cys399.

The protein belongs to the aconitase/IPM isomerase family. LeuC type 1 subfamily. In terms of assembly, heterodimer of LeuC and LeuD. [4Fe-4S] cluster is required as a cofactor.

It catalyses the reaction (2R,3S)-3-isopropylmalate = (2S)-2-isopropylmalate. Its pathway is amino-acid biosynthesis; L-leucine biosynthesis; L-leucine from 3-methyl-2-oxobutanoate: step 2/4. Catalyzes the isomerization between 2-isopropylmalate and 3-isopropylmalate, via the formation of 2-isopropylmaleate. This Staphylococcus aureus (strain JH1) protein is 3-isopropylmalate dehydratase large subunit.